We begin with the raw amino-acid sequence, 396 residues long: Ribosomal RNA large subunit methyltransferase I (396 aa).

Residues 2 to 81 (SVRLVLAKGR…ESIDIAFFTR (80 aa)) enclose the PUA domain.

This sequence belongs to the methyltransferase superfamily. RlmI family.

It is found in the cytoplasm. It catalyses the reaction cytidine(1962) in 23S rRNA + S-adenosyl-L-methionine = 5-methylcytidine(1962) in 23S rRNA + S-adenosyl-L-homocysteine + H(+). Its function is as follows. Specifically methylates the cytosine at position 1962 (m5C1962) of 23S rRNA. The protein is Ribosomal RNA large subunit methyltransferase I of Escherichia coli (strain UTI89 / UPEC).